The primary structure comprises 21 residues: Natriuretic peptide TsNP (21 aa).

Cysteines 5 and 21 form a disulfide.

In terms of tissue distribution, expressed by the venom gland.

It is found in the secreted. Scorpion venom natriuretic peptide that increases the perfusion pressure, glomerular filtration rate and urinary flow in the isolated perfused rat kidney assay. Induces a decrease of the percentages of renal transport for sodium, potassium and chloride and an increase of the urinary cGMP concentration. Also down-regulates the mRNA expression of natriuretic peptide receptor 1 (NPR1) in the kidneys whereas it up-regulates those of NPR2, NPR3 and guanylyl cyclase C (GUCY2C) mRNAs. May exhibit hypotensive and vasodepressor activities. This chain is Natriuretic peptide TsNP, found in Tityus serrulatus (Brazilian scorpion).